The following is a 210-amino-acid chain: Probable GTP-binding protein EngB (210 aa).

Residues 25–199 (TGIEVAFAGR…RQKLDTWFSE (175 aa)) enclose the EngB-type G domain. Residues 33–40 (GRSNAGKS), 60–64 (GRTQL), 78–81 (DLPG), 145–148 (TKAD), and 178–180 (FSS) each bind GTP. Ser-40 and Thr-62 together coordinate Mg(2+).

This sequence belongs to the TRAFAC class TrmE-Era-EngA-EngB-Septin-like GTPase superfamily. EngB GTPase family. Requires Mg(2+) as cofactor.

In terms of biological role, necessary for normal cell division and for the maintenance of normal septation. The sequence is that of Probable GTP-binding protein EngB from Shigella flexneri.